The sequence spans 378 residues: 1-acyl-sn-glycerol-3-phosphate acyltransferase delta (378 aa).

A helical transmembrane segment spans residues 11-31 (FLCHLVFCYVFIASGLIINTI). The short motif at 96–101 (HKFEID) is the HXXXXD motif element. A run of 3 helical transmembrane segments spans residues 125-145 (ELAY…VFCS), 307-327 (TLVN…QFLV), and 338-358 (LASF…MIGV).

It belongs to the 1-acyl-sn-glycerol-3-phosphate acyltransferase family. As to expression, widely expressed with highest levels in skeletal muscle, followed by heart, liver, prostate and thymus.

It localises to the endoplasmic reticulum membrane. The catalysed reaction is a 1-acyl-sn-glycero-3-phosphate + an acyl-CoA = a 1,2-diacyl-sn-glycero-3-phosphate + CoA. It catalyses the reaction (4Z,7Z,10Z,13Z,16Z,19Z)-docosahexaenoyl-CoA + 1-hexadecanoyl-sn-glycero-3-phosphate = 1-hexadecanoyl-2-(4Z,7Z,10Z,13Z,16Z,19Z-docosahexaenoyl)-sn-glycero-3-phosphate + CoA. The enzyme catalyses 1-octadecanoyl-sn-glycero-3-phosphate + (9Z,12Z)-octadecadienoyl-CoA = 1-octadecanoyl-2-(9Z,12Z-octadecadienoyl)-sn-glycero-3-phosphate + CoA. It carries out the reaction 1-octadecanoyl-sn-glycero-3-phosphate + (4Z,7Z,10Z,13Z,16Z,19Z)-docosahexaenoyl-CoA = 1-octadecanoyl-2-(4Z,7Z,10Z,13Z,16Z,19Z-docosahexaenoyl)-sn-glycero-3-phosphate + CoA. The catalysed reaction is (4Z,7Z,10Z,13Z,16Z,19Z)-docosahexaenoyl-CoA + 1-(9Z-octadecenoyl)-sn-glycero-3-phosphate = 1-(9Z-octadecenoyl)-2-(4Z,7Z,10Z,13Z,16Z,19Z-docosahexaenoyl)-sn-glycero-3-phosphate + CoA. Its pathway is phospholipid metabolism; CDP-diacylglycerol biosynthesis; CDP-diacylglycerol from sn-glycerol 3-phosphate: step 2/3. Its function is as follows. Converts 1-acyl-sn-glycerol-3-phosphate (lysophosphatidic acid or LPA) into 1,2-diacyl-sn-glycerol-3-phosphate (phosphatidic acid or PA) by incorporating an acyl moiety at the sn-2 position of the glycerol backbone. Exhibits high acyl-CoA specificity for polyunsaturated fatty acyl-CoA, especially docosahexaenoyl-CoA (22:6-CoA, DHA-CoA). The sequence is that of 1-acyl-sn-glycerol-3-phosphate acyltransferase delta (AGPAT4) from Homo sapiens (Human).